We begin with the raw amino-acid sequence, 307 residues long: Beta-lactamase (307 aa).

A signal peptide spans 1 to 26 (MKLWFSTLKLKKAAAVLLFSCVALAG). Cys-27 carries N-palmitoyl cysteine lipidation. Cys-27 is lipidated: S-diacylglycerol cysteine. Ser-86 (acyl-ester intermediate) is an active-site residue. The active-site Proton acceptor is the Glu-182. 248–250 (KTG) contributes to the substrate binding site.

It belongs to the class-A beta-lactamase family. Large exopenicillinase is the primary secretion product; it can be converted to small exopenicillinase.

Its subcellular location is the cell membrane. It carries out the reaction a beta-lactam + H2O = a substituted beta-amino acid. This is Beta-lactamase (penP) from Bacillus licheniformis.